Here is a 1699-residue protein sequence, read N- to C-terminus: Cilia- and flagella-associated protein 61 (1699 aa).

Polar residues predominate over residues 1–22; sequence MYSNNQLDNPNHSRSQYRNGDQ. Disordered regions lie at residues 1–23, 489–515, and 1340–1365; these read MYSN…GDQS, QLKR…DEFK, and ERDA…EENQ. The span at 489-503 shows a compositional bias: basic residues; that stretch reads QLKRPQKKVTKRPKR. Basic and acidic residues-rich tracts occupy residues 504-515 and 1340-1359; these read QKEEDKKEDEFK and ERDA…QSRD.

The protein resides in the cell projection. It is found in the cilium. As component of a spoke-associated complex, regulates ciliary mobility by mediating a stable and functional assembly of the radial spoke 3 (RS3). The polypeptide is Cilia- and flagella-associated protein 61 (Tetrahymena thermophila (strain SB210)).